Here is a 235-residue protein sequence, read N- to C-terminus: Segregation and condensation protein A (235 aa).

This sequence belongs to the ScpA family. Component of a cohesin-like complex composed of ScpA, ScpB and the Smc homodimer, in which ScpA and ScpB bind to the head domain of Smc. The presence of the three proteins is required for the association of the complex with DNA.

Its subcellular location is the cytoplasm. Functionally, participates in chromosomal partition during cell division. May act via the formation of a condensin-like complex containing Smc and ScpB that pull DNA away from mid-cell into both cell halves. In Streptococcus mutans serotype c (strain ATCC 700610 / UA159), this protein is Segregation and condensation protein A.